A 98-amino-acid polypeptide reads, in one-letter code: RING finger protein Z (98 aa).

Positions 1 to 10 (MGNTKTKDRQ) are enriched in basic and acidic residues. Positions 1-26 (MGNTKTKDRQYQSNSSQPTNTSAPVL) are disordered. The N-myristoyl glycine; by host moiety is linked to residue glycine 2. The segment covering 11-23 (YQSNSSQPTNTSA) has biased composition (polar residues). The RING-type; atypical zinc finger occupies 41 to 77 (CRCCWFADTNLVNCSNHYLCLKCLNTMLRRSNLCDIC). Positions 91-94 (PSAP) match the PTAP/PSAP motif motif.

It belongs to the arenaviridae Z protein family. In terms of assembly, interacts with protein NP; this interaction probably directs the encapsidated genome to budding sites. Interacts (via RING domain) with polymerase L; this interaction inhibits viral transcription and replication, Z partially blocks the product exit tunnel for the releasing nascent RNA product. Interacts with the glycoprotein complex; this interaction plays a role in virion budding. Interacts with host eIF4E; this interaction results in eIF4E reduced affinity for its substrate, the 5'-m7 G cap structure. Interacts (via late-budding domain) with host TSG101; this interaction is essential for budding and release of viral particles. Interacts with host RPLP0; this interaction may serve to load ribosome-like particles inside the virion. Interacts with host PML; this interaction induces PML bodies redistribution in the cytoplasm upon viral infection. In terms of processing, myristoylation is required for the role of RING finger protein Z in assembly and budding.

The protein resides in the virion. The protein localises to the host cytoplasm. Its subcellular location is the host perinuclear region. It is found in the host cell membrane. Plays a crucial role in virion assembly and budding. Expressed late in the virus life cycle, it acts as an inhibitor of viral transcription and RNA synthesis by interacting with the viral polymerase L. Presumably recruits the NP encapsidated genome to cellular membranes at budding sites via direct interaction with NP. Plays critical roles in the final steps of viral release by interacting with host TSG101, a member of the vacuolar protein-sorting pathway and using other cellular host proteins involved in vesicle formation pathway. The budding of the virus progeny occurs after association of protein Z with the viral glycoprotein complex SSP-GP1-GP2 at the cell periphery, step that requires myristoylation of protein Z. Also selectively represses protein production by associating with host eIF4E. In cell-based minigenome assay, has an inhibitory effect on the ribonucleoprotein machinery (vRNP), which is responsible for the replication and transcription of the viral genome. The sequence is that of RING finger protein Z from Chapare mammarenavirus (isolate Human/Bolivia/810419/2003).